The sequence spans 216 residues: Oligoribonuclease (216 aa).

In terms of domain architecture, Exonuclease spans 6–171 (VVWMDCEMTG…ADIKESIREL (166 aa)). The active site involves Tyr-128.

The protein belongs to the oligoribonuclease family.

Its subcellular location is the cytoplasm. 3'-to-5' exoribonuclease specific for small oligoribonucleotides. This is Oligoribonuclease from Nocardia farcinica (strain IFM 10152).